A 360-amino-acid polypeptide reads, in one-letter code: tRNA/tmRNA (uracil-C(5))-methyltransferase (360 aa).

Positions 185, 213, 218, 234, and 294 each coordinate S-adenosyl-L-methionine. C319 acts as the Nucleophile in catalysis. E353 acts as the Proton acceptor in catalysis.

It belongs to the class I-like SAM-binding methyltransferase superfamily. RNA M5U methyltransferase family. TrmA subfamily.

It catalyses the reaction uridine(54) in tRNA + S-adenosyl-L-methionine = 5-methyluridine(54) in tRNA + S-adenosyl-L-homocysteine + H(+). The enzyme catalyses uridine(341) in tmRNA + S-adenosyl-L-methionine = 5-methyluridine(341) in tmRNA + S-adenosyl-L-homocysteine + H(+). In terms of biological role, dual-specificity methyltransferase that catalyzes the formation of 5-methyluridine at position 54 (m5U54) in all tRNAs, and that of position 341 (m5U341) in tmRNA (transfer-mRNA). The chain is tRNA/tmRNA (uracil-C(5))-methyltransferase from Nitratiruptor sp. (strain SB155-2).